The primary structure comprises 484 residues: MILKSLLKGLDYEVIKGNEESKVQNIRYDNRKIEQGDAFVCVKGFKVDGHSFIGDAIKKGAKTLIVQEDVSVQEDITIIKVRDTRKALAIMSSNYFGNPKDKLKIIGITGTNGKTTSAFIIKSILEKAGFMTGLIGTIANYIGNKKVDAVRTTPESYELHELFKNMVDAGVEYCVMEVSSHSLELDRVYGIQFEEGIFTNLTRDHLDFHKTFENYYNAKFKLFERSNHSIINLDDPYGANIVKDIEERGVKTKVSTFSIEKESDFKAFEIKSHSNGSEFKVNLEGIEEFSINIPGEYNIYNSLGCIICAYNLNIPMDKIKEGLSDVVIPGRCELVAKEKNLPYSIIIDYAHTPDGLENILSTVKAFTKNRMISVFGCGGDRDKVKRPQMGKIGCELSDIAIITSDNPRSEEPMDIINDIVKPLNYDNFVIEVNRKEAIRKAMNMALEGDVIVIAGKGHETYQILKDETIHFDEREVVYDILEGK.

110–116 (GTNGKTT) is an ATP binding site. UDP-N-acetyl-alpha-D-muramoyl-L-alanyl-D-glutamate contacts are provided by residues 152–153 (TT), Ser179, and Arg187. An N6-carboxylysine modification is found at Lys219. Meso-2,6-diaminopimelate-binding positions include Arg381, 405 to 408 (DNPR), Gly455, and Glu459. A Meso-diaminopimelate recognition motif motif is present at residues 405–408 (DNPR).

It belongs to the MurCDEF family. MurE subfamily. It depends on Mg(2+) as a cofactor. Carboxylation is probably crucial for Mg(2+) binding and, consequently, for the gamma-phosphate positioning of ATP.

It localises to the cytoplasm. It catalyses the reaction UDP-N-acetyl-alpha-D-muramoyl-L-alanyl-D-glutamate + meso-2,6-diaminopimelate + ATP = UDP-N-acetyl-alpha-D-muramoyl-L-alanyl-gamma-D-glutamyl-meso-2,6-diaminopimelate + ADP + phosphate + H(+). It functions in the pathway cell wall biogenesis; peptidoglycan biosynthesis. In terms of biological role, catalyzes the addition of meso-diaminopimelic acid to the nucleotide precursor UDP-N-acetylmuramoyl-L-alanyl-D-glutamate (UMAG) in the biosynthesis of bacterial cell-wall peptidoglycan. The sequence is that of UDP-N-acetylmuramoyl-L-alanyl-D-glutamate--2,6-diaminopimelate ligase from Clostridium perfringens (strain 13 / Type A).